We begin with the raw amino-acid sequence, 200 residues long: Large ribosomal subunit protein uL4 (200 aa).

The segment at 42-65 (TRAQKTRSEVSGGGAKPWRQKGTG) is disordered.

It belongs to the universal ribosomal protein uL4 family. As to quaternary structure, part of the 50S ribosomal subunit.

Its function is as follows. One of the primary rRNA binding proteins, this protein initially binds near the 5'-end of the 23S rRNA. It is important during the early stages of 50S assembly. It makes multiple contacts with different domains of the 23S rRNA in the assembled 50S subunit and ribosome. Functionally, forms part of the polypeptide exit tunnel. The polypeptide is Large ribosomal subunit protein uL4 (Vibrio atlanticus (strain LGP32) (Vibrio splendidus (strain Mel32))).